Reading from the N-terminus, the 198-residue chain is MRIHHPLTLAALCVVLHESLGAAQHSNNVARLEHYRIAEIEHWEKRHLRSDSRGHRHHAHHGQVIDKENNNSQEQATTGNSVETNQVPSTEPTKDKTTPMKNALFKLFREKKLKTKNAGNGHAHDDDDDSDFSDDDVPTNAPTDAPTGAPTDAPTDAPTVAPTDAPTDAPTEAPTNAPTGTDAPTDAPTDAQVVPTFD.

A signal peptide spans 1 to 23; it reads MRIHHPLTLAALCVVLHESLGAA. Residues 46–49 carry the RxLR motif; that stretch reads RHLR. Disordered stretches follow at residues 48–101 and 115–198; these read LRSD…TPMK and TKNA…PTFD. A glycan (N-linked (GlcNAc...) asparagine) is linked at asparagine 70. The span at 70–91 shows a compositional bias: polar residues; that stretch reads NNSQEQATTGNSVETNQVPSTE. A compositionally biased stretch (acidic residues) spans 126-137; it reads DDDDSDFSDDDV. Residues 173–191 are compositionally biased toward low complexity; it reads APTNAPTGTDAPTDAPTDA.

This sequence belongs to the RxLR effector family. As to quaternary structure, interacts with the effector Htp3 within the host cells.

The protein localises to the secreted. Its subcellular location is the host cell. Functionally, effector involved in the disease saprolegniosis in salmonids and other freshwater fish, resulting in considerable economic losses in aquaculture. Within the host fish cells, Htp1 is involved in the uptake of the S.parasitica effector Htp3 at a neutral pH (pH 7.5) and its release from vesicles into host cytosol where it degrades nucleic acids. This is RxLR effector protein Htp1 from Saprolegnia parasitica (strain CBS 223.65).